The chain runs to 322 residues: MLPFNSCVYVLLIISLMSNCRALCRATALQGRSLCATGGPDAAFRAEHERLSAFESRPSSGSYDMRRALEPIEIETWFHIVSGETDADLVTDEMVILQLHYLQKAYEKASISYRLKGVTRHINETWARNGDDSAMKKALRRGGYSTLNVYFQTNLQPPSTTDFARWTSDGDNRHAYNSDLAPLSVLGFCTLPDPSINSSSPRSSYSKDGCNVLAKTMPGGPMTHYNRGGTAIHEIGHWNGLLHTFEGESCSEDNAGDYIADTPQQSVPTDGCPSQKDSCPDSPGLDDIHNFMDYSSDDCYASFTSNQLKRMRDMWFSMRKGK.

Positions 1-22 (MLPFNSCVYVLLIISLMSNCRA) are cleaved as a signal peptide. 2 N-linked (GlcNAc...) asparagine glycosylation sites follow: N123 and N197. H233 contacts Zn(2+). The active site involves E234. H237 lines the Zn(2+) pocket. A disulfide bond links C272 and C299.

Belongs to the peptidase M43B family.

The protein localises to the secreted. Its function is as follows. Secreted metalloproteinase that allows assimilation of proteinaceous substrates. Plays a pivotal role as a pathogenicity determinant during infections and contributes to the ability of the pathogen to persist within the mammalian host. This chain is Extracellular metalloprotease AFUA_1G07730, found in Aspergillus fumigatus (strain ATCC MYA-4609 / CBS 101355 / FGSC A1100 / Af293) (Neosartorya fumigata).